The primary structure comprises 232 residues: Ovalbumin-related protein X (232 aa).

It belongs to the serpin family. Ov-serpin subfamily. In terms of tissue distribution, expressed in egg white (at protein level).

In Gallus gallus (Chicken), this protein is Ovalbumin-related protein X (SERPINB14C).